A 466-amino-acid polypeptide reads, in one-letter code: Soluble pyridine nucleotide transhydrogenase (466 aa).

Residue 36–45 coordinates FAD; it reads EKESSVGGGC.

It belongs to the class-I pyridine nucleotide-disulfide oxidoreductase family. FAD serves as cofactor.

Its subcellular location is the cytoplasm. The enzyme catalyses NAD(+) + NADPH = NADH + NADP(+). Its function is as follows. Conversion of NADPH, generated by peripheral catabolic pathways, to NADH, which can enter the respiratory chain for energy generation. The sequence is that of Soluble pyridine nucleotide transhydrogenase from Vibrio vulnificus (strain CMCP6).